A 659-amino-acid polypeptide reads, in one-letter code: RNA polymerase II subunit A C-terminal domain phosphatase (659 aa).

In terms of domain architecture, FCP1 homology spans 139–303 (ITNRKLVLLV…KNSKEQMPVQ (165 aa)). The BRCT domain maps to 351-443 (ERHKVLDGCV…LKADENLFQL (93 aa)). Residues 484-504 (ALSDDEDDGDNEDEDDDGNDV) show a composition bias toward acidic residues. The interval 484-640 (ALSDDEDDGD…PESDDDDEFE (157 aa)) is disordered. The segment covering 505–519 (GEDKGDENLEEKQEK) has biased composition (basic and acidic residues). The span at 529–538 (QNGSVENQSG) shows a compositional bias: polar residues. Acidic residues-rich tracts occupy residues 560–576 (MEDEEEESDSDNEDDDT), 596–607 (ENEDDAVFDVDD), and 616–640 (IDEEEDDEDNEDEEVPESDDDDEFE).

The protein resides in the nucleus. It catalyses the reaction O-phospho-L-seryl-[protein] + H2O = L-seryl-[protein] + phosphate. The catalysed reaction is O-phospho-L-threonyl-[protein] + H2O = L-threonyl-[protein] + phosphate. In terms of biological role, during the late stages of oogenesis, dephosphorylates 'Ser-5' of the heptad repeats YSPTSPS in the C-terminal domain of the largest RNA polymerase II subunit ama-1. Similarly, dephosphorylates 'Ser-5' of ama-1 in early embryonic cells prior to the activation of the zygotic transcription program at the 4-cell embryonic stage. May dephosphorylate 'Ser-2' of the ama-1 heptad repeats YSPTSPS in embryonic somatic and germline cells. This Caenorhabditis elegans protein is RNA polymerase II subunit A C-terminal domain phosphatase.